Here is a 138-residue protein sequence, read N- to C-terminus: Histone H2B.4 (138 aa).

Residues 1-39 (MAPKAAEKKPAEKKPAGKAPAEKLPKAEKKISKDAGGSE) show a composition bias toward basic and acidic residues. The interval 1-48 (MAPKAAEKKPAEKKPAGKAPAEKLPKAEKKISKDAGGSEKKKKKSKKS) is disordered. A2 carries the n,N,N-trimethylalanine; alternate modification. The residue at position 2 (A2) is a N,N-dimethylalanine; alternate. A2 is subject to N-methylalanine; alternate. K4 is subject to N6-methyllysine. Residues K8 and K13 each carry the N6-acetyllysine modification. K14 carries the N6,N6-dimethyllysine modification. 4 positions are modified to N6-acetyllysine: K18, K23, K29, and K30. K135 is covalently cross-linked (Glycyl lysine isopeptide (Lys-Gly) (interchain with G-Cter in ubiquitin)).

This sequence belongs to the histone H2B family. The nucleosome is a histone octamer containing two molecules each of H2A, H2B, H3 and H4 assembled in one H3-H4 heterotetramer and two H2A-H2B heterodimers. The octamer wraps approximately 147 bp of DNA. In terms of processing, can be acetylated to form H2BK6ac, H2BK33ac and H2BK34ac. Monoubiquitinated by BRE1 to form H2BK143ub1 and deubiquitinated by UBP26. Required for heterochromatic histone H3 di- and trimethylation at H3K4me. May give a specific tag for epigenetic transcriptional activation.

The protein localises to the nucleus. Its subcellular location is the chromosome. Its function is as follows. Core component of nucleosome. Nucleosomes wrap and compact DNA into chromatin, limiting DNA accessibility to the cellular machineries which require DNA as a template. Histones thereby play a central role in transcription regulation, DNA repair, DNA replication and chromosomal stability. DNA accessibility is regulated via a complex set of post-translational modifications of histones, also called histone code, and nucleosome remodeling. This is Histone H2B.4 from Arabidopsis thaliana (Mouse-ear cress).